A 400-amino-acid polypeptide reads, in one-letter code: Octopine dehydrogenase (400 aa).

NADH contacts are provided by residues Gly-10–Gly-13 and Phe-35–Glu-38. Pyruvate contacts are provided by Gln-118 and Thr-143. Gln-118 provides a ligand contact to substrate. An NAD(+)-binding site is contributed by Cys-148. Met-206 provides a ligand contact to L-arginine. His-212 provides a ligand contact to pyruvate. The active site involves His-212. Arg-324 serves as a coordination point for NAD(+).

It belongs to the lysopine/nopaline/octopine/opine/vitopine dehydrogenases family.

The enzyme catalyses D-octopine + NAD(+) + H2O = L-arginine + pyruvate + NADH + H(+). In terms of biological role, catalyzes the reverse reaction of octopine dehydrogenation. Acts on L-arginine in preference to other substrates. This chain is Octopine dehydrogenase, found in Mizuhopecten yessoensis (Japanese scallop).